The following is a 449-amino-acid chain: Tubulin alpha-1 chain (449 aa).

8 residues coordinate GTP: glutamine 11, glutamate 71, serine 140, glycine 144, threonine 145, threonine 179, asparagine 206, and asparagine 228. Residue glutamate 71 participates in Mg(2+) binding. The active site involves glutamate 254.

It belongs to the tubulin family. In terms of assembly, dimer of alpha and beta chains. A typical microtubule is a hollow water-filled tube with an outer diameter of 25 nm and an inner diameter of 15 nM. Alpha-beta heterodimers associate head-to-tail to form protofilaments running lengthwise along the microtubule wall with the beta-tubulin subunit facing the microtubule plus end conferring a structural polarity. Microtubules usually have 13 protofilaments but different protofilament numbers can be found in some organisms and specialized cells. Mg(2+) is required as a cofactor.

The protein localises to the cytoplasm. Its subcellular location is the cytoskeleton. The catalysed reaction is GTP + H2O = GDP + phosphate + H(+). In terms of biological role, tubulin is the major constituent of microtubules, a cylinder consisting of laterally associated linear protofilaments composed of alpha- and beta-tubulin heterodimers. Microtubules grow by the addition of GTP-tubulin dimers to the microtubule end, where a stabilizing cap forms. Below the cap, tubulin dimers are in GDP-bound state, owing to GTPase activity of alpha-tubulin. The chain is Tubulin alpha-1 chain (tubA) from Emericella nidulans (strain FGSC A4 / ATCC 38163 / CBS 112.46 / NRRL 194 / M139) (Aspergillus nidulans).